The chain runs to 242 residues: Probable septum site-determining protein MinC (242 aa).

This sequence belongs to the MinC family. As to quaternary structure, interacts with MinD and FtsZ.

Its function is as follows. Cell division inhibitor that blocks the formation of polar Z ring septums. Rapidly oscillates between the poles of the cell to destabilize FtsZ filaments that have formed before they mature into polar Z rings. Prevents FtsZ polymerization. The polypeptide is Probable septum site-determining protein MinC (Thioalkalivibrio sulfidiphilus (strain HL-EbGR7)).